The following is a 2146-amino-acid chain: Conidial pigment polyketide synthase alb1 (2146 aa).

The interval 8–244 (YLFGDQTISC…KAPGVSGPYH (237 aa)) is N-terminal acylcarrier protein transacylase domain (SAT). In terms of domain architecture, Ketosynthase family 3 (KS3) spans 375–806 (RSKIAIIGMS…GGNTALLMED (432 aa)). Catalysis depends on for beta-ketoacyl synthase activity residues C547, H682, and H724. Positions 911–1232 (GFVFTGQGAQ…LSTLHLAGVE (322 aa)) are malonyl-CoA:ACP transacylase (MAT) domain. The active-site For acyl/malonyl transferase activity is S1001. Residues 1290–1602 (TTAAQKIVEC…ARKILDTVLP (313 aa)) are product template (PT) domain. Residues 1294–1427 (QKIVECREDG…VKLFNCAERE (134 aa)) are N-terminal hotdog fold. Positions 1294–1598 (QKIVECREDG…FQALARKILD (305 aa)) constitute a PKS/mFAS DH domain. Residue H1326 is the Proton acceptor; for dehydratase activity of the active site. The segment at 1453–1598 (AHRMQRGMVY…FQALARKILD (146 aa)) is C-terminal hotdog fold. Residue D1511 is the Proton donor; for dehydratase activity of the active site. Positions 1611-1644 (GAPAPAPARPIGEKKAPPPIKVTGPPKPNPSNAR) are disordered. Residues 1627–1639 (PPPIKVTGPPKPN) are compositionally biased toward pro residues. The Carrier 1 domain maps to 1647–1721 (SPVVARALEI…DFKAYLAEKG (75 aa)). S1681 carries the O-(pantetheine 4'-phosphoryl)serine modification. The segment at 1724 to 1769 (DSSSPEPSSEPESKFSFNSDASSEASSGLTTPGITSPVKHEAPKGG) is disordered. A compositionally biased stretch (low complexity) spans 1738 to 1750 (FSFNSDASSEASS). Residues 1768-1845 (GGQNKVWKSI…AVQAALDLKP (78 aa)) enclose the Carrier 2 domain. An O-(pantetheine 4'-phosphoryl)serine modification is found at S1805. Residues 1892-2019 (KLFMFPDGSG…SIGLFGDGKR (128 aa)) form a claisen cyclase domain region. S1962 (for Claisen cyclase activity) is an active-site residue.

It is found in the endosome. The catalysed reaction is 6 malonyl-CoA + acetyl-CoA + 6 H(+) = naphtopyrone YWA1 + 6 CO2 + 7 CoA + H2O. It participates in pigment biosynthesis; melanin biosynthesis. Functionally, non-reducing polyketide synthase; part of the gene cluster that mediates the biosynthesis of dihydroxynaphthalene (DHN)-melanin, a bluish-green pigment and a structural component of the conidial wall. The first step of the pathway is the production of the heptaketide naphtopyrone YWA1 by the polyketide synthase alb1 though condensation of acetyl-CoA with malonyl-CoA. The naphtopyrone YWA1 is then converted to the pentaketide 1,3,6,8-tetrahydroxynaphthalene (1,3,6,8-THN) by the heptaketide hydrolyase ayg1 though chain-length shortening. 1,3,6,8-THN is substrate of the hydroxynaphthalene reductase arp2 to yield scytalone. The scytalone dehydratase arp1 then reduces scytalone to 1,3,8-THN. 1,3,8-THN is also substrate of the hydroxynaphthalene reductase arp2 to yield vermelone. Vermelone is further converted by the multicopper oxidase abr1 to 1,8-DHN. Finally the laccase abr2 transforms 1,8-DHN to DHN-melanin. DHN-melanin biosynthesis appears to be initiated in endosomes where early enzymes (abl1, ayg1, arp1 and arp2) localize, with exocytosis leading to melanin deposition on the cell surface where late enzymes (abr1 and abr2) localize. DHN-melanin is an important structural component of the outer cell wall and is required for the presence of conidial surface hydrophobins. DHN-melanin also plays a crucial role in fungal virulence, including a protective role against the host's immune defenses. DHN-melanin protects also conidia against amoeba predation. The chain is Conidial pigment polyketide synthase alb1 from Aspergillus fumigatus (strain ATCC MYA-4609 / CBS 101355 / FGSC A1100 / Af293) (Neosartorya fumigata).